Consider the following 343-residue polypeptide: N-acetyl-gamma-glutamyl-phosphate reductase (343 aa).

Cys-149 is a catalytic residue.

Belongs to the NAGSA dehydrogenase family. Type 1 subfamily.

Its subcellular location is the cytoplasm. The enzyme catalyses N-acetyl-L-glutamate 5-semialdehyde + phosphate + NADP(+) = N-acetyl-L-glutamyl 5-phosphate + NADPH + H(+). The protein operates within amino-acid biosynthesis; L-arginine biosynthesis; N(2)-acetyl-L-ornithine from L-glutamate: step 3/4. In terms of biological role, catalyzes the NADPH-dependent reduction of N-acetyl-5-glutamyl phosphate to yield N-acetyl-L-glutamate 5-semialdehyde. This Alkalilimnicola ehrlichii (strain ATCC BAA-1101 / DSM 17681 / MLHE-1) protein is N-acetyl-gamma-glutamyl-phosphate reductase.